The following is a 415-amino-acid chain: von Willebrand factor A domain-containing protein 1 (415 aa).

Positions 1 to 18 (MLFWTAFSMALSLRLALA) are cleaved as a signal peptide. A VWFA domain is found at 34–209 (DLLFLLDSSA…IIARELRGSI (176 aa)). Residues Ser-74, Ser-80, and Ser-93 each carry the phosphoserine modification. Fibronectin type-III domains lie at 214 to 305 (QPQQ…LQEE) and 307 to 403 (GPER…TRAP). Asn-264 is a glycosylation site (N-linked (GlcNAc...) asparagine). Residues Cys-369 and Cys-393 are joined by a disulfide bond. The disordered stretch occupies residues 391–415 (KACTASGARTRAPQSMRPEAGPREP).

As to quaternary structure, homodimer or homomultimer; disulfide-linked. Interacts with HSPG2. N-glycosylated. In terms of tissue distribution, expressed at high levels in the chondrocytes. Detected in the vasculature of neural tissues, in basement membrane structures of the peripheral nervous system, in the apical ectodermal ridge of developing limb buds, and in skeletal and cardiac muscle (at protein level).

The protein resides in the secreted. Its subcellular location is the extracellular space. It localises to the extracellular matrix. The protein localises to the basement membrane. Its function is as follows. Promotes matrix assembly. Involved in the organization of skeletal muscles and in the formation of neuromuscular junctions. The sequence is that of von Willebrand factor A domain-containing protein 1 (Vwa1) from Mus musculus (Mouse).